A 282-amino-acid polypeptide reads, in one-letter code: Biotin synthase (282 aa).

The region spanning 1 to 228 (MQEIFLCSIS…NARLMVAGGR (228 aa)) is the Radical SAM core domain. Positions 17, 21, and 24 each coordinate [4Fe-4S] cluster. Positions 61, 96, 154, and 221 each coordinate [2Fe-2S] cluster.

Belongs to the radical SAM superfamily. Biotin synthase family. In terms of assembly, homodimer. Requires [4Fe-4S] cluster as cofactor. It depends on [2Fe-2S] cluster as a cofactor.

The enzyme catalyses (4R,5S)-dethiobiotin + (sulfur carrier)-SH + 2 reduced [2Fe-2S]-[ferredoxin] + 2 S-adenosyl-L-methionine = (sulfur carrier)-H + biotin + 2 5'-deoxyadenosine + 2 L-methionine + 2 oxidized [2Fe-2S]-[ferredoxin]. It participates in cofactor biosynthesis; biotin biosynthesis; biotin from 7,8-diaminononanoate: step 2/2. Catalyzes the conversion of dethiobiotin (DTB) to biotin by the insertion of a sulfur atom into dethiobiotin via a radical-based mechanism. The chain is Biotin synthase from Helicobacter pylori (strain ATCC 700392 / 26695) (Campylobacter pylori).